Here is a 120-residue protein sequence, read N- to C-terminus: UPF0344 protein lmo2265 (120 aa).

The next 4 membrane-spanning stretches (helical) occupy residues 3–23, 33–53, 62–82, and 92–112; these read GYIH…ALLI, MLQM…IMMV, ILAI…EMLL, and GMFL…GFYL.

This sequence belongs to the UPF0344 family.

The protein resides in the cell membrane. The sequence is that of UPF0344 protein lmo2265 from Listeria monocytogenes serovar 1/2a (strain ATCC BAA-679 / EGD-e).